The sequence spans 729 residues: Glutamine synthetase (729 aa).

The region spanning 85 to 174 (THYTHWFQPL…IPTIFISYTG (90 aa)) is the GS beta-grasp domain. The 437-residue stretch at 179-615 (YKTPLLKALA…VLGDLAINHI (437 aa)) folds into the GS catalytic domain. The Mg(2+) site is built by Glu215, Glu217, Glu286, and Glu293. L-glutamate is bound by residues 337–338 (NG) and Gly338. His342 serves as a coordination point for Mg(2+). ATP contacts are provided by Ser346 and Arg458. L-glutamate is bound at residue Arg458.

Belongs to the glutamine synthetase family. In terms of assembly, homohexamer. The cofactor is Mg(2+).

The protein resides in the cytoplasm. The catalysed reaction is L-glutamate + NH4(+) + ATP = L-glutamine + ADP + phosphate + H(+). Its activity is regulated as follows. Inhibited by L-histidine (46%), L-arginine (38%) and L-methionine-DL-sulphoximine. The activity of this enzyme is not controlled by adenylation. Its function is as follows. Catalyzes the ATP-dependent biosynthesis of glutamine from glutamate and ammonia. In Bacteroides fragilis (strain YCH46), this protein is Glutamine synthetase.